A 462-amino-acid chain; its full sequence is uncharacterized protein (462 aa).

Belongs to the IIV-6 329R family.

This is an uncharacterized protein from Aedes vexans (Inland floodwater mosquito).